We begin with the raw amino-acid sequence, 179 residues long: Endoribonuclease YbeY (179 aa).

Residues His141, His145, and His151 each contribute to the Zn(2+) site.

The protein belongs to the endoribonuclease YbeY family. Zn(2+) is required as a cofactor.

The protein localises to the cytoplasm. In terms of biological role, single strand-specific metallo-endoribonuclease involved in late-stage 70S ribosome quality control and in maturation of the 3' terminus of the 16S rRNA. This is Endoribonuclease YbeY from Synechocystis sp. (strain ATCC 27184 / PCC 6803 / Kazusa).